The following is a 218-amino-acid chain: Small ribosomal subunit protein uS3c (218 aa).

The region spanning 47-118 is the KH type-2 domain; the sequence is VQKNMRTSSG…KLNIAVTRIA (72 aa).

It belongs to the universal ribosomal protein uS3 family. In terms of assembly, part of the 30S ribosomal subunit.

It is found in the plastid. Its subcellular location is the chloroplast. This is Small ribosomal subunit protein uS3c (rps3) from Solanum bulbocastanum (Wild potato).